A 219-amino-acid polypeptide reads, in one-letter code: uncharacterized protein (219 aa).

This is an uncharacterized protein from Mycoplasma genitalium (strain ATCC 33530 / DSM 19775 / NCTC 10195 / G37) (Mycoplasmoides genitalium).